A 409-amino-acid polypeptide reads, in one-letter code: Argininosuccinate synthase (409 aa).

ATP-binding positions include 12–20 (AYSGGLDTS) and Ala39. An L-citrulline-binding site is contributed by Tyr91. Gly121 is a binding site for ATP. 3 residues coordinate L-aspartate: Thr123, Asn127, and Asp128. Asn127 is an L-citrulline binding site. L-citrulline is bound by residues Arg131, Ser180, Ser189, Glu265, and Tyr277.

Belongs to the argininosuccinate synthase family. Type 1 subfamily. As to quaternary structure, homotetramer.

It is found in the cytoplasm. It carries out the reaction L-citrulline + L-aspartate + ATP = 2-(N(omega)-L-arginino)succinate + AMP + diphosphate + H(+). The protein operates within amino-acid biosynthesis; L-arginine biosynthesis; L-arginine from L-ornithine and carbamoyl phosphate: step 2/3. The protein is Argininosuccinate synthase of Buchnera aphidicola subsp. Baizongia pistaciae (strain Bp).